A 360-amino-acid chain; its full sequence is Peptide chain release factor 1 (360 aa).

Gln237 is modified (N5-methylglutamine).

It belongs to the prokaryotic/mitochondrial release factor family. Methylated by PrmC. Methylation increases the termination efficiency of RF1.

The protein resides in the cytoplasm. Peptide chain release factor 1 directs the termination of translation in response to the peptide chain termination codons UAG and UAA. This Saccharophagus degradans (strain 2-40 / ATCC 43961 / DSM 17024) protein is Peptide chain release factor 1.